The sequence spans 472 residues: Membrane-bound acylglycerophosphatidylinositol O-acyltransferase MBOAT7 (472 aa).

Residues 1–5 lie on the Cytoplasmic side of the membrane; sequence MSPEE. The chain crosses the membrane as a helical span at residues 6–22; it reads WTYLVVLLISIPIGFLF. Over 23 to 33 the chain is Lumenal; it reads KKAGPGLKRWG. The helical transmembrane segment at 34–57 threads the bilayer; the sequence is AAAVGLGLTLFTCGPHTLHSLVTI. Over 58–73 the chain is Cytoplasmic; it reads LGTWALIQAQPCSCHA. The chain crosses the membrane as a helical span at residues 74–93; the sequence is LALAWTFSYLLFFRALSLLG. The Lumenal segment spans residues 94 to 194; sequence LPTPTPFTNA…VPSLRPLLRR (101 aa). A helical transmembrane segment spans residues 195-212; that stretch reads AWPAPLFGLLFLLSSHLF. Residues 213–231 lie on the Cytoplasmic side of the membrane; it reads PLEAVREDAFYARPLPARL. Residues 232–261 form a helical membrane-spanning segment; that stretch reads FYMIPVFFAFRMRFYVAWIAAECGCIAAGF. Residues 262-426 lie on the Lumenal side of the membrane; the sequence is GAYPVAAKAR…LSLADTLRYW (165 aa). Asn321 is a glycosylation site (N-linked (GlcNAc...) asparagine). A helical transmembrane segment spans residues 427–447; the sequence is ASIYFCIHFLALAALGLGLAL. Residues 448 to 472 lie on the Cytoplasmic side of the membrane; sequence GGGSPSRRKAASQPTSLAPEKLREE. Residues 453-472 form a disordered region; that stretch reads SRRKAASQPTSLAPEKLREE.

Belongs to the membrane-bound acyltransferase family. In terms of assembly, interacts with SPTSSA; the interaction facilitates MBOAT7 location to mitochondria-associated membranes (MAMs). Overexpressed in metastatic breast and bladder carcinomas relative to normal breast epithelium and urothelium.

It localises to the endoplasmic reticulum membrane. The catalysed reaction is a 1-acyl-sn-glycero-3-phospho-(1D-myo-inositol) + (5Z,8Z,11Z,14Z)-eicosatetraenoyl-CoA = a 1-acyl-2-(5Z,8Z,11Z,14Z-eicosatetraenoyl)-sn-glycero-3-phospho-(1D-myo-inositol) + CoA. It catalyses the reaction (5Z,8Z,11Z,14Z)-eicosatetraenoyl-CoA + 1-hexadecanoyl-sn-glycero-3-phosphocholine = 1-hexadecanoyl-2-(5Z,8Z,11Z,14Z-eicosatetraenoyl)-sn-glycero-3-phosphocholine + CoA. The enzyme catalyses a 1-acyl-sn-glycero-3-phospho-(1D-myo-inositol) + an acyl-CoA = a 1,2-diacyl-sn-glycero-3-phospho-(1D-myo-inositol) + CoA. It carries out the reaction 1-octadecanoyl-sn-glycero-3-phospho-(1D-myo-inositol) + (5Z,8Z,11Z,14Z)-eicosatetraenoyl-CoA = 1-octadecanoyl-2-(5Z,8Z,11Z,14Z-eicosatetraenoyl)-sn-glycero-3-phospho-(1D-myo-inositol) + CoA. It participates in lipid metabolism; phospholipid metabolism. Activity is inhibited by thimerosal. In terms of biological role, acyltransferase which catalyzes the transfer of an acyl group from an acyl-CoA to a lysophosphatidylinositol (1-acylglycerophosphatidylinositol or LPI) leading to the production of a phosphatidylinositol (1,2-diacyl-sn-glycero-3-phosphoinositol or PI) and participates in the reacylation step of the phospholipid remodeling pathway also known as the Lands cycle. Prefers arachidonoyl-CoA as the acyl donor, thus contributing to the regulation of free levels arachidonic acid in cell. In liver, participates in the regulation of triglyceride metabolism through the phosphatidylinositol acyl-chain remodeling regulation. The polypeptide is Membrane-bound acylglycerophosphatidylinositol O-acyltransferase MBOAT7 (Homo sapiens (Human)).